The primary structure comprises 367 residues: Probable outer membrane usher protein LpfC (367 aa).

The N-terminal stretch at 1–30 (MSRKTVSRTFSSFSISVVAVAVASTFSAHA) is a signal peptide.

Belongs to the fimbrial export usher family.

The protein localises to the cell outer membrane. Its function is as follows. Part of the lpfABCC'DE fimbrial operon. LP fimbriae may participate in the interaction with eukaryotic cells by assisting in microcolony formation. Could be involved in the export and assembly of the fimbrial subunits across the outer membrane. This Escherichia coli O157:H7 protein is Probable outer membrane usher protein LpfC (lpfC).